Here is an 84-residue protein sequence, read N- to C-terminus: Exodeoxyribonuclease 7 small subunit (84 aa).

The protein belongs to the XseB family. Heterooligomer composed of large and small subunits.

Its subcellular location is the cytoplasm. The catalysed reaction is Exonucleolytic cleavage in either 5'- to 3'- or 3'- to 5'-direction to yield nucleoside 5'-phosphates.. Bidirectionally degrades single-stranded DNA into large acid-insoluble oligonucleotides, which are then degraded further into small acid-soluble oligonucleotides. The sequence is that of Exodeoxyribonuclease 7 small subunit from Yersinia enterocolitica serotype O:8 / biotype 1B (strain NCTC 13174 / 8081).